A 371-amino-acid polypeptide reads, in one-letter code: Alanine dehydrogenase (371 aa).

The substrate site is built by Arg-15 and Lys-75. The active-site Proton donor/acceptor is the His-96. Residues Ser-134, 178-179, Asp-198, Lys-203, Ser-220, 239-240, 267-270, Arg-279, and 298-301 contribute to the NAD(+) site; these read TA, VL, IAID, and VANM. Residue Asp-270 is the Proton donor/acceptor of the active site. 2 residues coordinate Mg(2+): Glu-323 and His-327.

The protein belongs to the AlaDH/PNT family. In terms of assembly, homohexamer. Trimer of dimers. Mg(2+) serves as cofactor.

Its subcellular location is the secreted. It catalyses the reaction L-alanine + NAD(+) + H2O = pyruvate + NH4(+) + NADH + H(+). The protein operates within amino-acid degradation; L-alanine degradation via dehydrogenase pathway; NH(3) and pyruvate from L-alanine: step 1/1. Its function is as follows. Catalyzes the reversible reductive amination of pyruvate to L-alanine. However, since the physiological environment of M.tuberculosis has a neutral pH, it can be assumed that the enzyme catalyzes exclusively the formation of L-alanine. May play a role in cell wall synthesis as L-alanine is an important constituent of the peptidoglycan layer. The polypeptide is Alanine dehydrogenase (ald) (Mycobacterium tuberculosis (strain CDC 1551 / Oshkosh)).